The following is a 502-amino-acid chain: Dynein regulatory complex subunit 2 (502 aa).

Coiled coils occupy residues 96–160 (DSVI…RKAI) and 252–285 (EKSS…HSRE).

The protein belongs to the DRC2 family. As to quaternary structure, component of the nexin-dynein regulatory complex (N-DRC). Interacts with DRC1.

It localises to the cytoplasm. Its subcellular location is the cytoskeleton. The protein localises to the flagellum basal body. It is found in the cell projection. The protein resides in the cilium. It localises to the flagellum. Its subcellular location is the flagellum axoneme. In terms of biological role, component of the nexin-dynein regulatory complex (N-DRC), a key regulator of ciliary/flagellar motility which maintains the alignment and integrity of the distal axoneme and regulates microtubule sliding in motile axonemes. Plays a critical role in the assembly of N-DRC and also stabilizes the assembly of multiple inner dynein arms and radial spokes. Coassembles with DRC1 to form a central scaffold needed for assembly of the N-DRC and its attachment to the outer doublet microtubules. The polypeptide is Dynein regulatory complex subunit 2 (Ccdc65) (Rattus norvegicus (Rat)).